We begin with the raw amino-acid sequence, 496 residues long: 2,3-bisphosphoglycerate-independent phosphoglycerate mutase (496 aa).

Residues D12 and S62 each coordinate Mn(2+). Residue S62 is the Phosphoserine intermediate of the active site. Residues H121, 150-151 (RD), R181, R187, 252-255 (RNDR), and K317 each bind substrate. D384, H388, D425, H426, and H444 together coordinate Mn(2+).

It belongs to the BPG-independent phosphoglycerate mutase family. In terms of assembly, monomer. It depends on Mn(2+) as a cofactor.

The enzyme catalyses (2R)-2-phosphoglycerate = (2R)-3-phosphoglycerate. The protein operates within carbohydrate degradation; glycolysis; pyruvate from D-glyceraldehyde 3-phosphate: step 3/5. Functionally, catalyzes the interconversion of 2-phosphoglycerate and 3-phosphoglycerate. The protein is 2,3-bisphosphoglycerate-independent phosphoglycerate mutase of Anaplasma phagocytophilum (strain HZ).